The chain runs to 243 residues: Terpene cyclase dpmaB (243 aa).

The next 6 membrane-spanning stretches (helical) occupy residues Pro11 to Trp31, Ala51 to Phe71, Leu112 to Leu132, Ala141 to Ser161, Ser169 to Leu189, and Ile207 to Val227.

This sequence belongs to the paxB family.

It localises to the membrane. It participates in secondary metabolite biosynthesis; terpenoid biosynthesis. In terms of biological role, terpene cyclase; part of the gene cluster that mediates the biosynthesis of the diterpenoid pyrones subglutinols A and B. The first step of the pathway is the synthesis of the alpha-pyrone moiety by the polyketide synthase dpmaA via condensation of one acetyl-CoA starter unit with 3 malonyl-CoA units and 2 methylations. The alpha-pyrone is then combined with geranylgeranyl pyrophosphate (GGPP) formed by the GGPP synthase dpmaD through the action of the prenyltransferase dpmaC to yield a linear alpha-pyrone diterpenoid. Subsequent steps in the diterpenoid pyrone biosynthetic pathway involve the decalin core formation, which is initiated by the epoxidation of the C10-C11 olefin by the FAD-dependent oxidoreductase dpmaE, and is followed by a cyclization cascade catalyzed by the terpene cyclase dpmaB. The dehydrogenase dpmaF is then involved in tetrahydrofuran (THF) ring formation at the C5 unit to complete the formation of subglutinols A and B. The chain is Terpene cyclase dpmaB from Metarhizium anisopliae (Entomophthora anisopliae).